The primary structure comprises 379 residues: Cytochrome b (379 aa).

Helical transmembrane passes span 33–53 (FGSL…FLAM), 77–98 (WLIR…FLHV), 113–133 (WNIG…GYVL), 178–198 (FFAF…VHLL), 226–246 (IKDV…VLFS), 288–308 (LGGV…PILH), 320–340 (LSQC…WIGG), and 347–367 (FITI…LALP). Positions 83 and 97 each coordinate heme b. Heme b contacts are provided by His-182 and His-196.

This sequence belongs to the cytochrome b family. The cytochrome bc1 complex contains 11 subunits: 3 respiratory subunits (MT-CYB, CYC1 and UQCRFS1), 2 core proteins (UQCRC1 and UQCRC2) and 6 low-molecular weight proteins (UQCRH/QCR6, UQCRB/QCR7, UQCRQ/QCR8, UQCR10/QCR9, UQCR11/QCR10 and a cleavage product of UQCRFS1). This cytochrome bc1 complex then forms a dimer. The cofactor is heme b.

It localises to the mitochondrion inner membrane. In terms of biological role, component of the ubiquinol-cytochrome c reductase complex (complex III or cytochrome b-c1 complex) that is part of the mitochondrial respiratory chain. The b-c1 complex mediates electron transfer from ubiquinol to cytochrome c. Contributes to the generation of a proton gradient across the mitochondrial membrane that is then used for ATP synthesis. The polypeptide is Cytochrome b (MT-CYB) (Sciurus niger (Eastern fox squirrel)).